The following is a 333-amino-acid chain: Transcription factor MYB36 (333 aa).

2 HTH myb-type domains span residues K9 to L62 and R63 to L117. DNA-binding regions (H-T-H motif) lie at residues W38–L62 and W90–L113. Residues G119–L150 are disordered. Residues K122–E135 show a composition bias toward polar residues. Low complexity predominate over residues N136 to L150.

As to expression, expressed in leaves, roots (endodermis-specific) and seedlings.

The protein resides in the nucleus. Its function is as follows. Transcription factors that activates genes required for endodermal differentiation but represses genes involved in proliferative divisions, thus regulating the transition from proliferation to differentiation in root endodermis. Required for Casparian strip formation by positively regulating the expression of the Casparian strip genes CASP1, PER64 and ESB1 and other endodermis-specific genes, thus triggering correct localized lignin biosynthesis in root endodermis and subsequently regulating global ion homeostasis. This Arabidopsis thaliana (Mouse-ear cress) protein is Transcription factor MYB36.